A 200-amino-acid chain; its full sequence is Transcriptional repressor NrdR (200 aa).

A zinc finger spans residues 3–34 (CPFCQNPDTKVIDTRISDDGHSIRRRRECPNC). In terms of domain architecture, ATP-cone spans 46–136 (LLVKKRSGNV…VYQNFEDLED (91 aa)).

It belongs to the NrdR family. The cofactor is Zn(2+).

In terms of biological role, negatively regulates transcription of bacterial ribonucleotide reductase nrd genes and operons by binding to NrdR-boxes. In Bifidobacterium animalis subsp. lactis (strain AD011), this protein is Transcriptional repressor NrdR.